The following is a 230-amino-acid chain: Cytidylate kinase (230 aa).

12–20 (GPSGAGKGT) serves as a coordination point for ATP.

Belongs to the cytidylate kinase family. Type 1 subfamily.

It localises to the cytoplasm. It catalyses the reaction CMP + ATP = CDP + ADP. The catalysed reaction is dCMP + ATP = dCDP + ADP. This chain is Cytidylate kinase, found in Aeromonas salmonicida (strain A449).